Consider the following 216-residue polypeptide: Sugar fermentation stimulation protein homolog (216 aa).

Belongs to the SfsA family.

The polypeptide is Sugar fermentation stimulation protein homolog (Thermoplasma volcanium (strain ATCC 51530 / DSM 4299 / JCM 9571 / NBRC 15438 / GSS1)).